Consider the following 105-residue polypeptide: Large ribosomal subunit protein uL24 (105 aa).

The interval 75 to 105 is disordered; sequence DSDGNPTRVGYRTDEESGKRVRISRKNGKDI. A compositionally biased stretch (basic residues) spans 94–105; the sequence is RVRISRKNGKDI.

It belongs to the universal ribosomal protein uL24 family. As to quaternary structure, part of the 50S ribosomal subunit.

Its function is as follows. One of two assembly initiator proteins, it binds directly to the 5'-end of the 23S rRNA, where it nucleates assembly of the 50S subunit. One of the proteins that surrounds the polypeptide exit tunnel on the outside of the subunit. This Rhodococcus jostii (strain RHA1) protein is Large ribosomal subunit protein uL24.